The sequence spans 355 residues: Probable sugar phosphate/phosphate translocator At3g10290 (355 aa).

Residues 19–51 are disordered; sequence QKKQPNLSISSTTKMNKKNPDQKSDMSSSSSSP. A compositionally biased stretch (polar residues) spans 22-32; the sequence is QPNLSISSTTK. The next 10 helical transmembrane spans lie at 55-75, 89-109, 124-144, 150-170, 177-197, 198-218, 239-259, 277-297, 305-325, and 328-348; these read TLFI…VLLL, IFLT…SIVF, FLKV…GNIS, VSFN…FAYI, AWVT…ASGG, EPGF…ARAF, LMLY…IFME, YILL…NFLV, TLQV…ILLF, and PVTV…VAYG.

The protein belongs to the TPT transporter family. TPT (TC 2.A.7.9) subfamily.

It is found in the membrane. The protein is Probable sugar phosphate/phosphate translocator At3g10290 of Arabidopsis thaliana (Mouse-ear cress).